The following is a 99-amino-acid chain: Integration host factor subunit alpha (99 aa).

This sequence belongs to the bacterial histone-like protein family. Heterodimer of an alpha and a beta chain.

This protein is one of the two subunits of integration host factor, a specific DNA-binding protein that functions in genetic recombination as well as in transcriptional and translational control. This Psychrobacter arcticus (strain DSM 17307 / VKM B-2377 / 273-4) protein is Integration host factor subunit alpha.